Reading from the N-terminus, the 263-residue chain is Tryptophan synthase alpha chain (263 aa).

Active-site proton acceptor residues include glutamate 47 and aspartate 58.

It belongs to the TrpA family. In terms of assembly, tetramer of two alpha and two beta chains.

The protein localises to the plastid. It localises to the chloroplast. It catalyses the reaction (1S,2R)-1-C-(indol-3-yl)glycerol 3-phosphate + L-serine = D-glyceraldehyde 3-phosphate + L-tryptophan + H2O. The protein operates within amino-acid biosynthesis; L-tryptophan biosynthesis; L-tryptophan from chorismate: step 5/5. The alpha subunit is responsible for the aldol cleavage of indoleglycerol phosphate to indole and glyceraldehyde 3-phosphate. The polypeptide is Tryptophan synthase alpha chain (Antithamnion sp. (Red alga)).